Reading from the N-terminus, the 499-residue chain is Calcium/calmodulin-dependent protein kinase type II subunit delta (499 aa).

Position 2 is an N-acetylalanine (Ala-2). Residues 14 to 272 (YQLFEELGKG…ASEALKHPWI (259 aa)) form the Protein kinase domain. ATP-binding positions include 20–28 (LGKGAFSVV) and Lys-43. Asp-136 serves as the catalytic Proton acceptor. Residues 283 to 292 (HRQETVDCLK) are autoinhibitory domain. Thr-287 carries the phosphothreonine; by autocatalysis modification. The interval 291–301 (LKKFNARRKLK) is calmodulin-binding. Phosphothreonine; by autocatalysis occurs at positions 306 and 307. Residue Ser-315 is modified to Phosphoserine. The residue at position 318 (Lys-318) is an N6-acetyllysine. 2 positions are modified to phosphoserine: Ser-319 and Ser-330. A Phosphothreonine modification is found at Thr-331. Ser-333 is modified (phosphoserine). Thr-336 and Thr-337 each carry phosphothreonine. Phosphoserine is present on residues Ser-404, Ser-490, and Ser-494.

The protein belongs to the protein kinase superfamily. CAMK Ser/Thr protein kinase family. CaMK subfamily. In terms of assembly, CAMK2 is composed of 4 different chains: alpha (CAMK2A), beta (CAMK2B), gamma (CAMK2G), and delta (CAMK2D). The different isoforms assemble into homo- or heteromultimeric holoenzymes composed of 12 subunits with two hexameric rings stacked one on top of the other. Interacts with RRAD CACNB2. In terms of processing, autophosphorylation of Thr-287 following activation by Ca(2+)/calmodulin. Phosphorylation of Thr-287 locks the kinase into an activated state.

The protein localises to the cell membrane. It is found in the sarcolemma. It localises to the sarcoplasmic reticulum membrane. The catalysed reaction is L-seryl-[protein] + ATP = O-phospho-L-seryl-[protein] + ADP + H(+). The enzyme catalyses L-threonyl-[protein] + ATP = O-phospho-L-threonyl-[protein] + ADP + H(+). With respect to regulation, activated by Ca(2+)/calmodulin. Binding of calmodulin results in conformational change that relieves intrasteric autoinhibition and allows autophosphorylation of Thr-287 which turns the kinase in a constitutively active form and confers to the kinase a Ca(2+)-independent activity. Calcium/calmodulin-dependent protein kinase involved in the regulation of Ca(2+) homeostatis and excitation-contraction coupling (ECC) in heart by targeting ion channels, transporters and accessory proteins involved in Ca(2+) influx into the myocyte, Ca(2+) release from the sarcoplasmic reticulum (SR), SR Ca(2+) uptake and Na(+) and K(+) channel transport. Targets also transcription factors and signaling molecules to regulate heart function. In its activated form, is involved in the pathogenesis of dilated cardiomyopathy and heart failure. Contributes to cardiac decompensation and heart failure by regulating SR Ca(2+) release via direct phosphorylation of RYR2 Ca(2+) channel on 'Ser-2808'. In the nucleus, phosphorylates the MEF2 repressor HDAC4, promoting its nuclear export and binding to 14-3-3 protein, and expression of MEF2 and genes involved in the hypertrophic program. Is essential for left ventricular remodeling responses to myocardial infarction. In pathological myocardial remodeling acts downstream of the beta adrenergic receptor signaling cascade to regulate key proteins involved in ECC. Regulates Ca(2+) influx to myocytes by binding and phosphorylating the L-type Ca(2+) channel subunit beta-2 CACNB2. In addition to Ca(2+) channels, can target and regulate the cardiac sarcolemmal Na(+) channel Nav1.5/SCN5A and the K+ channel Kv4.3/KCND3, which contribute to arrhythmogenesis in heart failure. Phosphorylates phospholamban (PLN/PLB), an endogenous inhibitor of SERCA2A/ATP2A2, contributing to the enhancement of SR Ca(2+) uptake that may be important in frequency-dependent acceleration of relaxation (FDAR) and maintenance of contractile function during acidosis. May participate in the modulation of skeletal muscle function in response to exercise, by regulating SR Ca(2+) transport through phosphorylation of PLN/PLB and triadin, a ryanodine receptor-coupling factor. In response to interferon-gamma (IFN-gamma) stimulation, catalyzes phosphorylation of STAT1, stimulating the JAK-STAT signaling pathway. In Sus scrofa (Pig), this protein is Calcium/calmodulin-dependent protein kinase type II subunit delta (CAMK2D).